The following is a 562-amino-acid chain: Putative transport protein NT01EI_2530 (562 aa).

The next 6 membrane-spanning stretches (helical) occupy residues L8–G28, L32–Q52, F66–F86, M94–F114, I118–A138, and H158–A178. RCK C-terminal domains are found at residues L202 to N288 and K290 to F373. Helical transmembrane passes span L383–F403, F406–L426, M443–G463, I477–V497, and I541–V561.

It belongs to the AAE transporter (TC 2.A.81) family. YbjL subfamily.

It is found in the cell membrane. This chain is Putative transport protein NT01EI_2530, found in Edwardsiella ictaluri (strain 93-146).